The primary structure comprises 129 residues: Small ribosomal subunit protein uS11 (129 aa).

The protein belongs to the universal ribosomal protein uS11 family. As to quaternary structure, part of the 30S ribosomal subunit. Interacts with proteins S7 and S18. Binds to IF-3.

Located on the platform of the 30S subunit, it bridges several disparate RNA helices of the 16S rRNA. Forms part of the Shine-Dalgarno cleft in the 70S ribosome. In Bacillus anthracis (strain A0248), this protein is Small ribosomal subunit protein uS11.